Consider the following 128-residue polypeptide: Cytochrome c-type biogenesis protein CcmE (128 aa).

Over 1–8 (MQKRVRNR) the chain is Cytoplasmic. The chain crosses the membrane as a helical; Signal-anchor for type II membrane protein span at residues 9–29 (LITIIICFCSACLGISIILYN). The Periplasmic segment spans residues 30-128 (LEKNIVFFLP…KHDENYRPPQ (99 aa)). Positions 120 and 124 each coordinate heme.

The protein belongs to the CcmE/CycJ family.

The protein resides in the cell inner membrane. Heme chaperone required for the biogenesis of c-type cytochromes. Transiently binds heme delivered by CcmC and transfers the heme to apo-cytochromes in a process facilitated by CcmF and CcmH. In Rickettsia peacockii (strain Rustic), this protein is Cytochrome c-type biogenesis protein CcmE.